A 464-amino-acid chain; its full sequence is 3-isopropylmalate dehydratase large subunit (464 aa).

3 residues coordinate [4Fe-4S] cluster: cysteine 337, cysteine 397, and cysteine 400.

It belongs to the aconitase/IPM isomerase family. LeuC type 1 subfamily. As to quaternary structure, heterodimer of LeuC and LeuD. Requires [4Fe-4S] cluster as cofactor.

The catalysed reaction is (2R,3S)-3-isopropylmalate = (2S)-2-isopropylmalate. Its pathway is amino-acid biosynthesis; L-leucine biosynthesis; L-leucine from 3-methyl-2-oxobutanoate: step 2/4. Its function is as follows. Catalyzes the isomerization between 2-isopropylmalate and 3-isopropylmalate, via the formation of 2-isopropylmaleate. The protein is 3-isopropylmalate dehydratase large subunit of Bacillus anthracis (strain A0248).